Reading from the N-terminus, the 148-residue chain is UPF0758 protein YeeS (148 aa).

The 123-residue stretch at 26–148 folds into the MPN domain; that stretch reads AFTSTRAARE…VFSFAEHGLL (123 aa). 3 residues coordinate Zn(2+): His97, His99, and Asp110. The JAMM motif signature appears at 97–110; the sequence is HNHPSGEVTPSKAD.

It belongs to the UPF0758 family.

The chain is UPF0758 protein YeeS (yeeS) from Escherichia coli (strain K12).